A 38-amino-acid polypeptide reads, in one-letter code: MLYNMNYLVFSLLWYFLVGGGKGEVCWRFLGIVKSPNT.

The helical transmembrane segment at 10 to 32 (FSLLWYFLVGGGKGEVCWRFLGI) threads the bilayer.

It is found in the membrane. This is an uncharacterized protein from Saccharomyces cerevisiae (strain ATCC 204508 / S288c) (Baker's yeast).